The sequence spans 175 residues: MNRDDKAALVSQLNDSFGRAKLSVVADYCGLKVSELQQIRIELKGCDSEIRVAKNTLLKRAADGTGTAVLADDFTGTTAVITSYSDPVGPAKVLTQFAGGHEKFVIRSAALEGEKIGVDRLEALAKLPSREVLLGQLLSTWNNVPTGLVRVLSGVPRTFVYGLQALKDQKEQEGK.

The protein belongs to the universal ribosomal protein uL10 family. Part of the ribosomal stalk of the 50S ribosomal subunit. The N-terminus interacts with L11 and the large rRNA to form the base of the stalk. The C-terminus forms an elongated spine to which L12 dimers bind in a sequential fashion forming a multimeric L10(L12)X complex.

In terms of biological role, forms part of the ribosomal stalk, playing a central role in the interaction of the ribosome with GTP-bound translation factors. The sequence is that of Large ribosomal subunit protein uL10 from Desulfotalea psychrophila (strain LSv54 / DSM 12343).